A 639-amino-acid polypeptide reads, in one-letter code: MNSWFANISVNLKLGLGFGLVLVLTGLLALTGWTSLGSLIDRSNWMGDIGQLNKDLTDLRIARLQYMIANGDDTAAANTLAKLDAFSKQQAYLATTFKSPENVKLLGELGDTISAYKLSLNKMRQGYDATRAARVSMDSSAIRADQAMDALSQEVMARPEADSVRLAQYQLISKARQQLLQVRIDVRGYIAENSSANEQAALRQLDAALADTDNLKRQLPSEDARLQQFENAVLAYRDAVRQFRDAVANITTSRAEMTVQGADIVKRSDALYQIQLERRDIESTQARSLQAIATLLALLVGVLAAVLITRQITRPLQDTLVAVEKIASGDLTQHMRVTRRDELGVLQQGIARMGTTLRELISGIRDGVTQIASAAEELSAVTEQTSAGANSQKVETDQVATAMHEMAATVQEVARNAEQASHAATGADDEARAGDRVVGEAIGQIERLAEDMHRSTEAMNLLQQESQKIGSVMDVIKSVAEQTNLLALNAAIEAARAGEAGRGFAVVADEVRGLAQRTQKSTEEIEELIASLQHGTQQVANAMQGSRALTDSSVELARKAGSSLESITSTVSSIQSMNQQIAAAAEQQSAVAEEISRSILNVRDVSEQTAAASDETAASSVELARLGGQLQTLVSQFRV.

Topologically, residues 1–13 (MNSWFANISVNLK) are cytoplasmic. A helical membrane pass occupies residues 14 to 34 (LGLGFGLVLVLTGLLALTGWT). Topologically, residues 35–288 (SLGSLIDRSN…RDIESTQARS (254 aa)) are periplasmic. The region spanning 41–283 (DRSNWMGDIG…IQLERRDIES (243 aa)) is the HBM domain. 60–65 (RIARLQ) serves as a coordination point for (S)-malate. 60-65 (RIARLQ) contacts succinate. The acetate site is built by D138, R183, R187, and Y236. Residues 191-245 (AENSSANEQAALRQLDAALADTDNLKRQLPSEDARLQQFENAVLAYRDAVRQFRD) are a coiled coil. R254 and T258 together coordinate (S)-malate. A succinate-binding site is contributed by R254. Residues 289 to 309 (LQAIATLLALLVGVLAAVLIT) form a helical membrane-spanning segment. Residues 310-362 (RQITRPLQDTLVAVEKIASGDLTQHMRVTRRDELGVLQQGIARMGTTLRELIS) form the HAMP domain. Residues 310 to 639 (RQITRPLQDT…LQTLVSQFRV (330 aa)) lie on the Cytoplasmic side of the membrane. The Methyl-accepting transducer domain occupies 367–603 (GVTQIASAAE…EISRSILNVR (237 aa)).

The protein belongs to the methyl-accepting chemotaxis (MCP) protein family. Homodimer. Exists as a mixture of monomers and dimers in solution. Ligand binding stabilizes the dimeric form. Methylated by CheR2.

The protein localises to the cell membrane. With respect to regulation, binding of citrate to the ligand-binding domain reduces the chemotaxis towards the strong attractants such as malate and succinate. However, in physiologically relevant niches, citrate is mostly complexed with magnesium or calcium ions, and does not bind McpS. Its function is as follows. Chemotactic-signal transducers respond to changes in the concentration of attractants and repellents in the environment, transduce a signal from the outside to the inside of the cell, and facilitate sensory adaptation through the variation of the level of methylation. McpS is a specific chemoreceptor for 6 tricarboxylic acid (TCA) cycle intermediates (succinate, fumarate, malate, oxaloacetate, citrate and isocitrate), butyrate and acetate. Malate, succinate, fumarate and oxaloacetate cause the strongest chemotactic response. This is Methyl-accepting chemotaxis protein McpS (mcpS) from Pseudomonas putida (strain ATCC 47054 / DSM 6125 / CFBP 8728 / NCIMB 11950 / KT2440).